We begin with the raw amino-acid sequence, 296 residues long: MKESTVIHFPFSVRRGVWLSKYSTFRIGGPANYFKEVNSAEEAQQVIQFLYSQNYPFIIVGKGSNCLFDDQGFDGFVLYNNIQKKEFLSETTIKVYSGMSFSFLGKTLSSSGYSGLEFAVGIPGSVGGAVFMNAGIGNQDIASAIESVEAINSNGDIISYQAAELEFGYRRSRFQNSKEFILSATFRLSKSASSIQIAKDLLQNKLLSQPYQQPSAGCIFRNPPGNYAGKLIDEAGLKGLSLGGAQISSKHANFIVNNGRATSHEVKELIQIVRDKLKSQGISLEEEVRIIPYRLP.

The FAD-binding PCMH-type domain occupies 26–191 (RIGGPANYFK…LSATFRLSKS (166 aa)). Arginine 170 is an active-site residue. Cysteine 218 acts as the Proton donor in catalysis. The active site involves glutamate 287.

This sequence belongs to the MurB family. The cofactor is FAD.

The protein localises to the cytoplasm. The catalysed reaction is UDP-N-acetyl-alpha-D-muramate + NADP(+) = UDP-N-acetyl-3-O-(1-carboxyvinyl)-alpha-D-glucosamine + NADPH + H(+). Its pathway is cell wall biogenesis; peptidoglycan biosynthesis. Cell wall formation. The protein is UDP-N-acetylenolpyruvoylglucosamine reductase of Chlamydia felis (strain Fe/C-56) (Chlamydophila felis).